The chain runs to 113 residues: U11-theraphotoxin-Hhn1f (113 aa).

Residues 1 to 21 (MNTVRVTFLLVFVLAVSLGQA) form the signal peptide. The propeptide occupies 22 to 74 (DKDENRMEMQEKTEQGKSYLDFAENLLLQKLEELEAKLLEEDSEESRNSRQKR). Positions 61-83 (EEDSEESRNSRQKRCIGEGVPCD) are disordered. Cystine bridges form between Cys-75–Cys-90, Cys-82–Cys-95, and Cys-89–Cys-110.

It belongs to the neurotoxin 14 (magi-1) family. 01 (HNTX-16) subfamily. Expressed by the venom gland.

It is found in the secreted. Functionally, probable ion channel inhibitor. The sequence is that of U11-theraphotoxin-Hhn1f from Cyriopagopus hainanus (Chinese bird spider).